A 1147-amino-acid polypeptide reads, in one-letter code: Nucleolar protein 6 (1147 aa).

Residues 1-49 form a disordered region; that stretch reads MQKKRSRAGAAEQEAASDDGEMSDSSDKMEVSQNKGKSGIKRAPEADDV. Positions 15-24 are enriched in acidic residues; sequence AASDDGEMSD.

Belongs to the NRAP family. In terms of assembly, part of the small subunit (SSU) processome, composed of more than 70 proteins and the RNA chaperone small nucleolar RNA (snoRNA) U3.

The protein resides in the nucleus. It is found in the nucleolus. Its subcellular location is the chromosome. Its function is as follows. Part of the small subunit (SSU) processome, first precursor of the small eukaryotic ribosomal subunit. During the assembly of the SSU processome in the nucleolus, many ribosome biogenesis factors, an RNA chaperone and ribosomal proteins associate with the nascent pre-rRNA and work in concert to generate RNA folding, modifications, rearrangements and cleavage as well as targeted degradation of pre-ribosomal RNA by the RNA exosome. The sequence is that of Nucleolar protein 6 (nol6) from Xenopus laevis (African clawed frog).